A 333-amino-acid chain; its full sequence is Ketol-acid reductoisomerase (NADP(+)) (333 aa).

One can recognise a KARI N-terminal Rossmann domain in the interval 1–171 (MSNDTQPKIA…GGARANIIKT (171 aa)). NADP(+) contacts are provided by residues 14-17 (YGSQ), R37, T42, and 72-75 (DMVQ). The active site involves H97. An NADP(+)-binding site is contributed by G123. The 146-residue stretch at 172–317 (TFKEETETDL…KKLRAKMVWL (146 aa)) folds into the KARI C-terminal knotted domain. Residues D180, E184, E216, and E220 each coordinate Mg(2+). Residue S241 participates in substrate binding.

Belongs to the ketol-acid reductoisomerase family. Requires Mg(2+) as cofactor.

It catalyses the reaction (2R)-2,3-dihydroxy-3-methylbutanoate + NADP(+) = (2S)-2-acetolactate + NADPH + H(+). It carries out the reaction (2R,3R)-2,3-dihydroxy-3-methylpentanoate + NADP(+) = (S)-2-ethyl-2-hydroxy-3-oxobutanoate + NADPH + H(+). It functions in the pathway amino-acid biosynthesis; L-isoleucine biosynthesis; L-isoleucine from 2-oxobutanoate: step 2/4. It participates in amino-acid biosynthesis; L-valine biosynthesis; L-valine from pyruvate: step 2/4. Functionally, involved in the biosynthesis of branched-chain amino acids (BCAA). Catalyzes an alkyl-migration followed by a ketol-acid reduction of (S)-2-acetolactate (S2AL) to yield (R)-2,3-dihydroxy-isovalerate. In the isomerase reaction, S2AL is rearranged via a Mg-dependent methyl migration to produce 3-hydroxy-3-methyl-2-ketobutyrate (HMKB). In the reductase reaction, this 2-ketoacid undergoes a metal-dependent reduction by NADPH to yield (R)-2,3-dihydroxy-isovalerate. This chain is Ketol-acid reductoisomerase (NADP(+)), found in Xanthomonas oryzae pv. oryzae (strain MAFF 311018).